A 101-amino-acid polypeptide reads, in one-letter code: NAD(P)H-quinone oxidoreductase subunit 4L, chloroplastic (101 aa).

A run of 3 helical transmembrane segments spans residues 2–22 (MLEH…YGLI), 32–52 (MCLE…SGFF), and 61–81 (IFSV…LAIV).

This sequence belongs to the complex I subunit 4L family. NDH is composed of at least 16 different subunits, 5 of which are encoded in the nucleus.

It is found in the plastid. It localises to the chloroplast thylakoid membrane. The catalysed reaction is a plastoquinone + NADH + (n+1) H(+)(in) = a plastoquinol + NAD(+) + n H(+)(out). It carries out the reaction a plastoquinone + NADPH + (n+1) H(+)(in) = a plastoquinol + NADP(+) + n H(+)(out). In terms of biological role, NDH shuttles electrons from NAD(P)H:plastoquinone, via FMN and iron-sulfur (Fe-S) centers, to quinones in the photosynthetic chain and possibly in a chloroplast respiratory chain. The immediate electron acceptor for the enzyme in this species is believed to be plastoquinone. Couples the redox reaction to proton translocation, and thus conserves the redox energy in a proton gradient. The protein is NAD(P)H-quinone oxidoreductase subunit 4L, chloroplastic of Jasminum nudiflorum (Winter jasmine).